Consider the following 277-residue polypeptide: Anamorsin homolog (277 aa).

Residues M1–V134 are N-terminal SAM-like domain. The linker stretch occupies residues S135 to V191. [2Fe-2S] cluster contacts are provided by C199, C210, C213, and C215. Positions C199 to C215 are fe-S binding site A. [4Fe-4S] cluster-binding residues include C238, C241, C249, and C252. 2 short sequence motifs (cx2C motif) span residues C238–C241 and C249–C252. The fe-S binding site B stretch occupies residues C238–C252.

It belongs to the anamorsin family. As to quaternary structure, monomer. Requires [2Fe-2S] cluster as cofactor. It depends on [4Fe-4S] cluster as a cofactor.

The protein resides in the cytoplasm. The protein localises to the mitochondrion intermembrane space. Its function is as follows. Component of the cytosolic iron-sulfur (Fe-S) protein assembly (CIA) machinery. Required for the maturation of extramitochondrial Fe-S proteins. Part of an electron transfer chain functioning in an early step of cytosolic Fe-S biogenesis, facilitating the de novo assembly of a [4Fe-4S] cluster on the cytosolic Fe-S scaffold complex. Electrons are transferred from NADPH via a FAD- and FMN-containing diflavin oxidoreductase. Together with the diflavin oxidoreductase, also required for the assembly of the diferric tyrosyl radical cofactor of ribonucleotide reductase (RNR), probably by providing electrons for reduction during radical cofactor maturation in the catalytic small subunit. In Phytophthora infestans (strain T30-4) (Potato late blight agent), this protein is Anamorsin homolog.